The sequence spans 574 residues: Zinc finger and BTB domain-containing protein 3 (574 aa).

The BTB domain occupies 74-142 (CDCTVMVGST…MYAGQLTLRG (69 aa)). 2 disordered regions span residues 175-277 (AEAD…SSTE) and 305-346 (SLRV…APAP). Residues Lys181 and Lys182 each participate in a glycyl lysine isopeptide (Lys-Gly) (interchain with G-Cter in SUMO2) cross-link. The segment covering 187-212 (NSQLPSLEFLSSTSRGTQPSLASAET) has biased composition (polar residues). The segment covering 323–334 (PPASAPTSAPAP) has biased composition (low complexity). Ser362 is modified (phosphoserine). The disordered stretch occupies residues 364–403 (EETDVSDEQPQGPERAFPSGGAVYGAQPSQPEAFEDPGAA). 2 C2H2-type zinc fingers span residues 472–494 (PTCK…ATVH) and 500–523 (YECR…RKAH). Positions 526-535 (DLAKRSKPDP) are enriched in basic and acidic residues. The segment at 526–574 (DLAKRSKPDPEVGPLLGVQPLPGSPTADRQSSSGGGPPKDFVLAPKTNI) is disordered. Lys532 is covalently cross-linked (Glycyl lysine isopeptide (Lys-Gly) (interchain with G-Cter in SUMO2)). Ser549 is modified (phosphoserine).

Its subcellular location is the nucleus. Functionally, may be involved in transcriptional regulation. In Homo sapiens (Human), this protein is Zinc finger and BTB domain-containing protein 3 (ZBTB3).